We begin with the raw amino-acid sequence, 167 residues long: Crossover junction endodeoxyribonuclease RuvC (167 aa).

Active-site residues include aspartate 14, glutamate 75, and aspartate 147. Mg(2+) is bound by residues aspartate 14, glutamate 75, and aspartate 147.

This sequence belongs to the RuvC family. In terms of assembly, homodimer which binds Holliday junction (HJ) DNA. The HJ becomes 2-fold symmetrical on binding to RuvC with unstacked arms; it has a different conformation from HJ DNA in complex with RuvA. In the full resolvosome a probable DNA-RuvA(4)-RuvB(12)-RuvC(2) complex forms which resolves the HJ. The cofactor is Mg(2+).

It is found in the cytoplasm. The enzyme catalyses Endonucleolytic cleavage at a junction such as a reciprocal single-stranded crossover between two homologous DNA duplexes (Holliday junction).. In terms of biological role, the RuvA-RuvB-RuvC complex processes Holliday junction (HJ) DNA during genetic recombination and DNA repair. Endonuclease that resolves HJ intermediates. Cleaves cruciform DNA by making single-stranded nicks across the HJ at symmetrical positions within the homologous arms, yielding a 5'-phosphate and a 3'-hydroxyl group; requires a central core of homology in the junction. The consensus cleavage sequence is 5'-(A/T)TT(C/G)-3'. Cleavage occurs on the 3'-side of the TT dinucleotide at the point of strand exchange. HJ branch migration catalyzed by RuvA-RuvB allows RuvC to scan DNA until it finds its consensus sequence, where it cleaves and resolves the cruciform DNA. The chain is Crossover junction endodeoxyribonuclease RuvC from Synechocystis sp. (strain ATCC 27184 / PCC 6803 / Kazusa).